Consider the following 912-residue polypeptide: Non-lysosomal glucosylceramidase (912 aa).

The segment at 886–912 (HKKNSSRPAVTQGTAPSQPECGPKRSL) is disordered. Positions 891–902 (SRPAVTQGTAPS) are enriched in polar residues.

This sequence belongs to the non-lysosomal glucosylceramidase family.

Its subcellular location is the endoplasmic reticulum membrane. The protein resides in the golgi apparatus membrane. It carries out the reaction a beta-D-glucosyl-(1&lt;-&gt;1')-N-acylsphing-4-enine + H2O = an N-acylsphing-4-enine + D-glucose. It catalyses the reaction a beta-D-galactosyl-(1&lt;-&gt;1')-N-acylsphing-4-enine + H2O = an N-acylsphing-4-enine + D-galactose. The catalysed reaction is beta-D-glucosyl-(1-&gt;3)-O-lithocholate + H2O = lithocholate + D-glucose. The enzyme catalyses beta-D-glucosyl-(1-&gt;3)-O-chenodeoxycholate + H2O = chenodeoxycholate + D-glucose. It carries out the reaction a di-trans,poly-cis-dolichyl beta-D-glucosyl phosphate + chenodeoxycholate = beta-D-glucosyl-(1-&gt;3)-O-chenodeoxycholate + a di-trans,poly-cis-dolichyl phosphate + H(+). It catalyses the reaction octyl beta-D-glucose + chenodeoxycholate = beta-D-glucosyl-(1-&gt;3)-O-chenodeoxycholate + octan-1-ol. The catalysed reaction is cholesteryl 3-beta-D-glucoside + H2O = cholesterol + D-glucose. The enzyme catalyses a beta-D-glucosyl-(1&lt;-&gt;1')-N-acylsphing-4-enine + cholesterol = cholesteryl 3-beta-D-glucoside + an N-acylsphing-4-enine. It carries out the reaction beta-D-glucosyl-N-(9Z-octadecenoyl)-sphing-4E-enine + cholesterol = N-(9Z-octadecenoyl)-sphing-4-enine + cholesteryl 3-beta-D-glucoside. It catalyses the reaction a beta-D-galactosyl-(1&lt;-&gt;1')-N-acylsphing-4-enine + cholesterol = cholesteryl 3-beta-D-galactoside + an N-acylsphing-4-enine. The catalysed reaction is 1-(beta-D-galactosyl)-N-dodecanoylsphing-4-enine + cholesterol = cholesteryl 3-beta-D-galactoside + N-dodecanoylsphing-4-enine. It participates in lipid metabolism; sphingolipid metabolism. Its pathway is steroid metabolism; cholesterol metabolism. Its activity is regulated as follows. Enzymatic activity is dependent on membrane association and requires the presence of lipids. In terms of biological role, non-lysosomal glucosylceramidase that catalyzes the hydrolysis of glucosylceramides/GlcCers (such as beta-D-glucosyl-(1&lt;-&gt;1')-N-acylsphing-4-enine) to free glucose and ceramides (such as N-acylsphing-4-enine). GlcCers are membrane glycosphingolipids that have a wide intracellular distribution. They are the main precursors of more complex glycosphingolipids that play a role in cellular growth, differentiation, adhesion, signaling, cytoskeletal dynamics and membrane properties. Involved in the transglucosylation of cholesterol, transfers glucose from GlcCer to cholesterol, thereby modifying its water solubility and biological properties. Under specific conditions, may catalyze the reverse reaction, transferring glucose from cholesteryl-3-beta-D-glucoside to ceramide (such as N-acylsphing-4-enine). May play a role in the metabolism of bile acids. Able to hydrolyze bile acid 3-O-glucosides as well as to produce bile acid-glucose conjugates thanks to a bile acid glucosyl transferase activity. Catalyzes the hydrolysis of galactosylceramides/GalCers (such as beta-D-galactosyl-(1&lt;-&gt;1')-N-acylsphing-4-enine), as well as the galactosyl transfer between GalCers and cholesterol in vitro with lower activity compared with their activity against GlcCers. The protein is Non-lysosomal glucosylceramidase of Rattus norvegicus (Rat).